A 152-amino-acid chain; its full sequence is Large ribosomal subunit protein uL15 (152 aa).

The segment at 1–54 (MGLKLNELSPGVGAKKTAHRKGRGIGSGLGKTGGRGVKGQKSRSGSGVRRGFEG) is disordered. A compositionally biased stretch (gly residues) spans 24–37 (GIGSGLGKTGGRGV).

Belongs to the universal ribosomal protein uL15 family. Part of the 50S ribosomal subunit.

Binds to the 23S rRNA. This chain is Large ribosomal subunit protein uL15, found in Psychrobacter sp. (strain PRwf-1).